Here is a 203-residue protein sequence, read N- to C-terminus: Large ribosomal subunit protein uL13 (203 aa).

Alanine 2 is modified (N-acetylalanine). At arginine 59 the chain carries Citrulline. Serine 77 is modified (phosphoserine). At arginine 140 the chain carries Citrulline. Lysine 191 is modified (N6-acetyllysine).

The protein belongs to the universal ribosomal protein uL13 family. Component of the 60S ribosome. Component of the GAIT complex. Interacts with EIF4G1. Post-translationally, phosphorylation at Ser-77 upon interferon-gamma treatment in monocytes involves a DAPK1-DAPK3 kinase cascade and is causing release from the ribosome, association with the GAIT complex and subsequent involvement in transcript-selective translation inhibition. Citrullinated by PADI4.

It is found in the cytoplasm. In terms of biological role, associated with ribosomes but is not required for canonical ribosome function and has extra-ribosomal functions. Component of the GAIT (gamma interferon-activated inhibitor of translation) complex which mediates interferon-gamma-induced transcript-selective translation inhibition in inflammation processes. Upon interferon-gamma activation and subsequent phosphorylation dissociates from the ribosome and assembles into the GAIT complex which binds to stem loop-containing GAIT elements in the 3'-UTR of diverse inflammatory mRNAs (such as ceruplasmin) and suppresses their translation. In the GAIT complex interacts with m7G cap-bound eIF4G at or near the eIF3-binding site and blocks the recruitment of the 43S ribosomal complex. Involved in methylation of rRNA. This Oryctolagus cuniculus (Rabbit) protein is Large ribosomal subunit protein uL13 (RPL13A).